A 341-amino-acid chain; its full sequence is Aspartate carbamoyltransferase catalytic subunit (341 aa).

Carbamoyl phosphate-binding residues include Arg-89 and Thr-90. An L-aspartate-binding site is contributed by Lys-117. Carbamoyl phosphate is bound by residues Arg-139, His-169, and Gln-172. L-aspartate is bound by residues Arg-202 and Arg-257. Carbamoyl phosphate is bound by residues Gly-298 and Pro-299.

This sequence belongs to the aspartate/ornithine carbamoyltransferase superfamily. ATCase family. In terms of assembly, heterododecamer (2C3:3R2) of six catalytic PyrB chains organized as two trimers (C3), and six regulatory PyrI chains organized as three dimers (R2).

The enzyme catalyses carbamoyl phosphate + L-aspartate = N-carbamoyl-L-aspartate + phosphate + H(+). The protein operates within pyrimidine metabolism; UMP biosynthesis via de novo pathway; (S)-dihydroorotate from bicarbonate: step 2/3. Functionally, catalyzes the condensation of carbamoyl phosphate and aspartate to form carbamoyl aspartate and inorganic phosphate, the committed step in the de novo pyrimidine nucleotide biosynthesis pathway. The chain is Aspartate carbamoyltransferase catalytic subunit from Paraburkholderia xenovorans (strain LB400).